We begin with the raw amino-acid sequence, 379 residues long: Intracellular hyaluronan-binding protein 4.S (379 aa).

2 disordered regions span residues 52–260 and 332–379; these read THRK…FSQE and SLAR…PALA. The segment covering 71-81 has biased composition (basic and acidic residues); sequence GKKESQKDRKA. A compositionally biased stretch (polar residues) spans 107–116; the sequence is KVTQNENVDS. Basic and acidic residues-rich tracts occupy residues 118–133 and 139–158; these read VKVD…REVR and RSAE…DKQM. A compositionally biased stretch (gly residues) spans 162 to 174; sequence GGRGGMRGRGRGG. Residues 179–208 are compositionally biased toward basic and acidic residues; that stretch reads TESDNLRGKREFDRHSGSDRARMRPEDKRG. 2 stretches are compositionally biased toward acidic residues: residues 232-241 and 368-379; these read EQVETTETEA and NPDDPEDFPALA.

It belongs to the SERBP1-HABP4 family. In terms of assembly, associates with ribosomes; promoting ribosome stabilization. Interacts with eef2/eEF2; promoting ribosome stabilization.

The protein localises to the nucleus. Its subcellular location is the cytoplasm. The protein resides in the stress granule. It localises to the nucleolus. It is found in the nucleus speckle. The protein localises to the cajal body. Its function is as follows. Ribosome-binding protein that promotes ribosome hibernation, a process during which ribosomes are stabilized in an inactive state and preserved from proteasomal degradation. Acts via its association with eef2/eEF2 factor at the A-site of the ribosome, promoting ribosome stabilization in an inactive state compatible with storage. Plays a key role in ribosome hibernation in the mature egg by promoting ribosome stabilization. Ribosomes, which are produced in large quantities during oogenesis, are stored and translationally repressed in the egg and early embryo. In Xenopus laevis (African clawed frog), this protein is Intracellular hyaluronan-binding protein 4.S.